We begin with the raw amino-acid sequence, 230 residues long: Interleukin-22 receptor subunit alpha-2 (230 aa).

The signal sequence occupies residues 1-20 (MMPKHCLLGLLIILLSSATE). 2 Fibronectin type-III domains span residues 29–128 (TPQK…TKLD) and 129–230 (PPVV…VHIP). 2 disulfide bridges follow: Cys77–Cys85 and Cys205–Cys226.

The protein belongs to the type II cytokine receptor family. As to expression, highly expressed in lymph nodes and at lower levels in lung, spleen, and thymus. Not expressed in kidney, liver and heart.

It is found in the secreted. Its function is as follows. Receptor for IL22. Binds to IL22, prevents interaction with the functional IL-22R complex and blocks the activity of IL22 (in vitro). May play an important role as an IL22 antagonist in the regulation of inflammatory responses. The protein is Interleukin-22 receptor subunit alpha-2 (Il22ra2) of Mus musculus (Mouse).